The chain runs to 205 residues: High frequency lysogenization protein HflD homolog (205 aa).

The protein belongs to the HflD family.

Its subcellular location is the cytoplasm. The protein resides in the cell inner membrane. The protein is High frequency lysogenization protein HflD homolog of Shewanella sp. (strain ANA-3).